Here is an 85-residue protein sequence, read N- to C-terminus: Putative RING finger protein 095L (85 aa).

The RING-type; degenerate zinc-finger motif lies at 39–73; that stretch reads CPIWYNYQVNTVFLPCAHVACYLCSKIIKNCHLCR.

The polypeptide is Putative RING finger protein 095L (Invertebrate iridescent virus 6 (IIV-6)).